The following is a 1087-amino-acid chain: Voltage-gated inwardly rectifying potassium channel KCNH3 (1087 aa).

Residues 1 to 228 are Cytoplasmic-facing; that stretch reads MPAMRGLLAP…HCGALRATWD (228 aa). The region spanning 18–90 is the PAS domain; sequence IATRFDGTHS…QQIRKALDEH (73 aa). The PAC domain maps to 93-145; the sequence is FKAELILYRKSGLPFWCLLDVIPIKNEKGEVALFLVSHKDISETKNRGGPDNW. Residues 137 to 150 are compositionally biased toward basic and acidic residues; it reads KNRGGPDNWKERGG. The tract at residues 137 to 161 is disordered; it reads KNRGGPDNWKERGGGRRRYGRAGSK. The helical transmembrane segment at 229 to 249 threads the bilayer; that stretch reads GFILLATLYVAVTVPYSVCVS. The Extracellular segment spans residues 250 to 259; sequence TAREPSAARG. Residues 260-280 form a helical membrane-spanning segment; sequence PPSVCDLAVEVLFILDIVLNF. Over 281 to 302 the chain is Cytoplasmic; the sequence is RTTFVSKSGQVVFAPKSICLHY. The helical transmembrane segment at 303-323 threads the bilayer; that stretch reads VTTWFLLDVIAALPFDLLHAF. Residues 324–331 lie on the Extracellular side of the membrane; that stretch reads KVNVYVGA. A helical; Voltage-sensor transmembrane segment spans residues 332–352; that stretch reads HLLKTVRLLRLLRLLPRLDRY. Topologically, residues 353–361 are cytoplasmic; the sequence is SQYSAVVLT. The helical transmembrane segment at 362–382 threads the bilayer; it reads LLMAVFALLAHWVACVWFYIG. The Extracellular portion of the chain corresponds to 383–456; the sequence is QQEIENSESE…GGPSLRSAYI (74 aa). Residues 416-436 are disordered; sequence SPDGGNSSGQSENCSSSGGGS. Residues 419–431 show a composition bias toward low complexity; it reads GGNSSGQSENCSS. 3 N-linked (GlcNAc...) asparagine glycosylation sites follow: N421, N428, and N439. The segment at residues 457–477 is an intramembrane region (pore-forming); the sequence is TSLYFALSSLTSVGFGNVSAN. The short motif at 468 to 473 is the Selectivity filter element; that stretch reads SVGFGN. The Extracellular portion of the chain corresponds to 478–482; sequence TDTEK. A helical transmembrane segment spans residues 483–503; sequence IFSICTMLIGALMHAVVFGNV. Topologically, residues 504 to 1087 are cytoplasmic; sequence TAIIQRMYAR…QWTQEEGTGV (584 aa). 585–700 serves as a coordination point for a nucleoside 3',5'-cyclic phosphate; it reads LFEAASRGCL…FAPRFSRGLR (116 aa). Disordered regions lie at residues 733–813 and 975–1061; these read EKET…LQLP and LMAP…PWDP. The segment covering 776 to 788 has biased composition (basic residues); it reads TAPRPRLGGRGRP.

This sequence belongs to the potassium channel family. H (Eag) (TC 1.A.1.20) subfamily. Kv12.2/KCNH3 sub-subfamily. As to quaternary structure, the potassium channel is probably composed of a homo- or heterotetrameric complex of pore-forming alpha subunits that can associate with modulating beta subunits. Interacts with KCNE1 and KCNE3; these interactions regulate KCNH3 trafficking to the plasma membrane and its subsequent voltage-gated potassium channel activity. Post-translationally, N-glycosylated. N-glycosylation mediates traffick to the cell membrane but is not necessary for voltage-gated potassium channel activity. Highly expressed in adult and embryonic brain, in particular in cerebellum, brain stem, hippocampus, cortex and striatum. Also found in pituitary.

Its subcellular location is the cell membrane. It carries out the reaction K(+)(in) = K(+)(out). Functionally, pore-forming (alpha) subunit of a voltage-gated inwardly rectifying potassium channel. Charactherized by a fast rate of activation during depolarization followed by a rapid inactivation at much more depolarized value causing inward rectification due to a C-type inactivation mechanism. Exhibits a rapid recovery from inactivation. The chain is Voltage-gated inwardly rectifying potassium channel KCNH3 from Rattus norvegicus (Rat).